The following is a 261-amino-acid chain: Undecaprenyl-diphosphatase (261 aa).

8 helical membrane passes run 1–21 (MNYIQAIILAIIEGITEFLPV), 41–61 (FTKLFTIVIQLGAILSVVVLY), 69–89 (LDFYFKLLVAFIPAVVLGLLF), 95–115 (ALLESPVTVAVSLLVGGIILL), 129–149 (ITYLKAFKIGLFQCIAMIPGV), 169–186 (AAEFSFFLAVPTMLGATL), 206–226 (ILIIGNIVAFLVALLAIKTFI), and 241–261 (RIVAGIVLLLIHFFIHPLTLI).

Belongs to the UppP family.

It localises to the cell inner membrane. It carries out the reaction di-trans,octa-cis-undecaprenyl diphosphate + H2O = di-trans,octa-cis-undecaprenyl phosphate + phosphate + H(+). Catalyzes the dephosphorylation of undecaprenyl diphosphate (UPP). Confers resistance to bacitracin. The protein is Undecaprenyl-diphosphatase of Flavobacterium psychrophilum (strain ATCC 49511 / DSM 21280 / CIP 103535 / JIP02/86).